The sequence spans 512 residues: uncharacterized protein (512 aa).

2 consecutive transmembrane segments (helical) span residues 20-40 (IFPV…IYIW) and 222-242 (GIAL…FGYI). The 216-residue stretch at 297–512 (EQLIQSIEQT…TLMCYQIPLV (216 aa)) folds into the Histidine kinase domain. His-325 is subject to Phosphohistidine; by autocatalysis.

Autophosphorylated.

It localises to the cell membrane. The catalysed reaction is ATP + protein L-histidine = ADP + protein N-phospho-L-histidine.. Probable member of the two-component regulatory system SE_0166/SE_0165. May activate SE_0165 by phosphorylation. This is an uncharacterized protein from Staphylococcus epidermidis (strain ATCC 12228 / FDA PCI 1200).